Consider the following 92-residue polypeptide: UPF0223 protein Sez_0908 (92 aa).

Belongs to the UPF0223 family.

This Streptococcus equi subsp. zooepidemicus (strain MGCS10565) protein is UPF0223 protein Sez_0908.